The chain runs to 80 residues: MNLKVLAVFVLCAILVVVTAERRGTETGGYKKDTLQDLKKRTHDCFDRYREAACTSDNIRLLCKTSAKYQINCKKSCGLC.

A signal peptide spans 1–20 (MNLKVLAVFVLCAILVVVTA). The propeptide occupies 21-39 (ERRGTETGGYKKDTLQDLK). The 36-residue stretch at 45 to 80 (CFDRYREAACTSDNIRLLCKTSAKYQINCKKSCGLC) folds into the ShKT domain. Disulfide bonds link cysteine 45–cysteine 80, cysteine 54–cysteine 73, and cysteine 63–cysteine 77. Positions 68–69 (KY) are crucial for binding to potassium channels.

It belongs to the sea anemone type 1 potassium channel toxin family. Type 1b subfamily.

It is found in the secreted. The protein resides in the nematocyst. Functionally, inhibits voltage-gated potassium channels (Kv1/KCNA). This Anemonia viridis (Snakelocks anemone) protein is U-actitoxin-Avd9b.